Consider the following 196-residue polypeptide: Putative NADH dehydrogenase/NAD(P)H nitroreductase Smlt0482 (196 aa).

It belongs to the nitroreductase family. HadB/RutE subfamily. FMN serves as cofactor.

In Stenotrophomonas maltophilia (strain K279a), this protein is Putative NADH dehydrogenase/NAD(P)H nitroreductase Smlt0482.